The chain runs to 266 residues: Protein YABBY 5 (266 aa).

Residues 1–22 (MMSSAPETFSLDHLSQHQQQQP) form a disordered region. The C4-type zinc finger occupies 36-63 (CNFCDTILAVGVPCSSLFKTVTVRCGHC). Residues 119–141 (ASPNVSSITSSNSSCANNAPATS) show a composition bias toward low complexity. The disordered stretch occupies residues 119 to 174 (ASPNVSSITSSNSSCANNAPATSMASAANKATQREPQQPKNAPSANRTSEKRQRVP). The span at 142–165 (MASAANKATQREPQQPKNAPSANR) shows a compositional bias: polar residues.

It belongs to the YABBY family.

Its subcellular location is the nucleus. Its function is as follows. May be involved in leaf cell growth and differentiation, rather than abaxial cell fate determination. The polypeptide is Protein YABBY 5 (YAB5) (Oryza sativa subsp. indica (Rice)).